A 200-amino-acid chain; its full sequence is 3-isopropylmalate dehydratase small subunit (200 aa).

Belongs to the LeuD family. LeuD type 1 subfamily. As to quaternary structure, heterodimer of LeuC and LeuD.

The catalysed reaction is (2R,3S)-3-isopropylmalate = (2S)-2-isopropylmalate. It functions in the pathway amino-acid biosynthesis; L-leucine biosynthesis; L-leucine from 3-methyl-2-oxobutanoate: step 2/4. Its function is as follows. Catalyzes the isomerization between 2-isopropylmalate and 3-isopropylmalate, via the formation of 2-isopropylmaleate. The polypeptide is 3-isopropylmalate dehydratase small subunit (Photobacterium profundum (strain SS9)).